Here is a 443-residue protein sequence, read N- to C-terminus: Trigger factor (443 aa).

The PPIase FKBP-type domain occupies 161–246 (GDKVVIDFQG…IKKIMEGKLP (86 aa)).

It belongs to the FKBP-type PPIase family. Tig subfamily.

The protein resides in the cytoplasm. The catalysed reaction is [protein]-peptidylproline (omega=180) = [protein]-peptidylproline (omega=0). In terms of biological role, involved in protein export. Acts as a chaperone by maintaining the newly synthesized protein in an open conformation. Functions as a peptidyl-prolyl cis-trans isomerase. This Legionella pneumophila subsp. pneumophila (strain Philadelphia 1 / ATCC 33152 / DSM 7513) protein is Trigger factor.